A 194-amino-acid chain; its full sequence is Cytochrome c oxidase assembly protein CtaG (194 aa).

Residues Met1–Gln12 are Cytoplasmic-facing. The helical; Signal-anchor for type II membrane protein transmembrane segment at Thr13–Cys35 threads the bilayer. The Periplasmic portion of the chain corresponds to Arg36–Asn194.

Belongs to the COX11/CtaG family.

Its subcellular location is the cell inner membrane. Its function is as follows. Exerts its effect at some terminal stage of cytochrome c oxidase synthesis, probably by being involved in the insertion of the copper B into subunit I. In Roseobacter denitrificans (strain ATCC 33942 / OCh 114) (Erythrobacter sp. (strain OCh 114)), this protein is Cytochrome c oxidase assembly protein CtaG.